Reading from the N-terminus, the 442-residue chain is uncharacterized protein (442 aa).

[4Fe-4S] cluster-binding residues include Cys-43, Cys-49, Cys-52, and Cys-130. 4 residues coordinate S-adenosyl-L-methionine: Gln-273, Tyr-302, Glu-323, and Asp-372. Cys-399 (nucleophile) is an active-site residue.

This sequence belongs to the class I-like SAM-binding methyltransferase superfamily. RNA M5U methyltransferase family.

This is an uncharacterized protein from Protochlamydia amoebophila (strain UWE25).